The sequence spans 414 residues: Transcriptional repressor protein YY1 (414 aa).

The interval 1–170 is interaction with the SMAD1/SMAD4 complex; sequence MASGDTLYIA…GGGSSSSGGG (170 aa). The interval 33–81 is disordered; the sequence is VETIETTVVGEEEEEDDDDEDGGGGDHGGGGGHGHAGHHHHHHHHHHHP. Residues 42-55 are compositionally biased toward acidic residues; sequence GEEEEEDDDDEDGG. The segment covering 57-66 has biased composition (gly residues); it reads GDHGGGGGHG. Basic residues predominate over residues 67-81; that stretch reads HAGHHHHHHHHHHHP. Residues 116–260 are gly-rich region involved in interaction with HCFC1; it reads DDSDGLRAED…YSEYMTGKKL (145 aa). Ser118 is subject to Phosphoserine; by CK2. A disordered region spans residues 157–203; that stretch reads GKSGGGGSSSSGGGRVKKGGGKKSGKKSYLSGGAGAAGGGGADPGNK. Gly residues predominate over residues 158–170; the sequence is KSGGGGSSSSGGG. The segment covering 171-182 has biased composition (basic residues); it reads RVKKGGGKKSGK. Residues Lys182 and Lys183 each participate in a glycyl lysine isopeptide (Lys-Gly) (interchain with G-Cter in SUMO2) cross-link. At Ser187 the chain carries Phosphoserine. The span at 188 to 199 shows a compositional bias: gly residues; the sequence is GGAGAAGGGGAD. Glycyl lysine isopeptide (Lys-Gly) (interchain with G-Cter in SUMO2) cross-links involve residues Lys208 and Lys230. Ser247 bears the Phosphoserine mark. The involved in nuclear matrix association stretch occupies residues 257–341; sequence GKKLPPGGIP…KAFVESSKLK (85 aa). Residues Lys286 and Lys288 each participate in a glycyl lysine isopeptide (Lys-Gly) (interchain with G-Cter in SUMO2) cross-link. The tract at residues 295–414 is binding to DNA; that stretch reads TIACPHKGCT…LTHAKAKNNQ (120 aa). 3 consecutive C2H2-type zinc fingers follow at residues 296-320, 325-347, and 353-377; these read IACPHKGCTKMFRDNSAMRKHLHTH, HVCAECGKAFVESSKLKRHQLVH, and FQCTFEGCGKRFSLDFNLRTHVRIH. Zn(2+)-binding residues include Cys298, Cys303, His316, His320, Cys327, Cys330, His343, His347, Cys355, Cys360, His373, and His377. The involved in repression of activated transcription stretch occupies residues 333 to 371; sequence AFVESSKLKRHQLVHTGEKPFQCTFEGCGKRFSLDFNLR. Residues 371–397 are involved in masking transactivation domain; sequence RTHVRIHTGDRPYVCPFDGCNKKFAQS. A Phosphothreonine modification is found at Thr378. The C2H2-type 4 zinc-finger motif lies at 383 to 407; sequence YVCPFDGCNKKFAQSTNLKSHILTH. Positions 385, 390, 403, and 407 each coordinate Zn(2+). Glycyl lysine isopeptide (Lys-Gly) (interchain with G-Cter in SUMO2) cross-links involve residues Lys409 and Lys411.

It belongs to the YY transcription factor family. As to quaternary structure, interacts with YAF2 through the region encompassing the first and second zinc fingers. Component of the chromatin remodeling INO80 complex; specifically part of a complex module associated with the DBINO domain of INO80. Interacts with EED and EZH2; the interactions are indicative for an association with the PRC2/EED-EZH2 complex. Interacts with SFMBT2. Found in a complex with SMAD1 and SMAD4. Found in a complex with YY1, SIN3A and HDAC1. Accessory component of the polycomb repressive deubiquitinase (PR-DUB) complex, at least composed of BAP1, one of ASXL1, ASXL2 or (probably) ASXL3 and one of MBD5 or MBD6; the PR-DUB core associates with a number of accessory proteins, including FOXK1, FOXK2, KDM1B, HCFC1, YY1 and OGT. Interacts (via Gly-rich region) with HCFC1; the interaction is direct. Interacts (via C-terminal zinc-finger domains) with BAP1 (via ULD domain); the interaction is direct and requires HCFC1. Post-translationally, phosphorylation at Ser-118 by CK2 prevents proteolytic cleavage by caspase-7 (CASP7) during apoptosis. Proteolytically cleaved by caspase-7 (CASP7) in response to apoptosis. Phosphorylation at Ser-118 protects against proteolytic cleavage. In terms of processing, transiently poly-ADP-ribosylated by PARP1 upon DNA damage, with the effect of decreasing affinity of YY1 to its cognate DNA binding sites. Post-translationally, ubiquitinated.

The protein resides in the nucleus matrix. Multifunctional transcription factor that exhibits positive and negative control on a large number of cellular and viral genes by binding to sites overlapping the transcription start site. Binds to the consensus sequence 5'-CCGCCATNTT-3'; some genes have been shown to contain a longer binding motif allowing enhanced binding; the initial CG dinucleotide can be methylated greatly reducing the binding affinity. The effect on transcription regulation is depending upon the context in which it binds and diverse mechanisms of action include direct activation or repression, indirect activation or repression via cofactor recruitment, or activation or repression by disruption of binding sites or conformational DNA changes. Its activity is regulated by transcription factors and cytoplasmic proteins that have been shown to abrogate or completely inhibit YY1-mediated activation or repression. For example, it acts as a repressor in absence of adenovirus E1A protein but as an activator in its presence. Acts synergistically with the SMAD1 and SMAD4 in bone morphogenetic protein (BMP)-mediated cardiac-specific gene expression. Binds to SMAD binding elements (SBEs) (5'-GTCT/AGAC-3') within BMP response element (BMPRE) of cardiac activating regions. May play an important role in development and differentiation. Proposed to recruit the PRC2/EED-EZH2 complex to target genes that are transcriptional repressed. Involved in DNA repair. In vitro, binds to DNA recombination intermediate structures (Holliday junctions). Plays a role in regulating enhancer activation. Recruits the PR-DUB complex to specific gene-regulatory regions. In terms of biological role, proposed core component of the chromatin remodeling INO80 complex which is involved in transcriptional regulation, DNA replication and probably DNA repair; proposed to target the INO80 complex to YY1-responsive elements. This Homo sapiens (Human) protein is Transcriptional repressor protein YY1 (YY1).